The primary structure comprises 124 residues: Small ribosomal subunit protein uS12 (124 aa).

D89 is modified (3-methylthioaspartic acid). Residues 101 to 124 (TLDTSGVKDRRQSRSKYGAKAPKE) are disordered.

Belongs to the universal ribosomal protein uS12 family. As to quaternary structure, part of the 30S ribosomal subunit. Contacts proteins S8 and S17. May interact with IF1 in the 30S initiation complex.

Functionally, with S4 and S5 plays an important role in translational accuracy. Interacts with and stabilizes bases of the 16S rRNA that are involved in tRNA selection in the A site and with the mRNA backbone. Located at the interface of the 30S and 50S subunits, it traverses the body of the 30S subunit contacting proteins on the other side and probably holding the rRNA structure together. The combined cluster of proteins S8, S12 and S17 appears to hold together the shoulder and platform of the 30S subunit. The polypeptide is Small ribosomal subunit protein uS12 (Synechococcus sp. (strain CC9902)).